A 200-amino-acid chain; its full sequence is Superoxide dismutase [Mn] 1 (200 aa).

Mn(2+) is bound by residues H29, H76, D158, and H162.

The protein belongs to the iron/manganese superoxide dismutase family. Mn(2+) is required as a cofactor.

The catalysed reaction is 2 superoxide + 2 H(+) = H2O2 + O2. Functionally, destroys superoxide anion radicals which are normally produced within the cells and which are toxic to biological systems. The polypeptide is Superoxide dismutase [Mn] 1 (sod1) (Haloferax volcanii (strain ATCC 29605 / DSM 3757 / JCM 8879 / NBRC 14742 / NCIMB 2012 / VKM B-1768 / DS2) (Halobacterium volcanii)).